The primary structure comprises 427 residues: BSD domain-containing protein 1 (427 aa).

2 positions are modified to phosphoserine: S92 and S166. The BSD domain maps to 146–198 (WLSEFCLEEKKGEISELLVGSPSIRALYTKMVPAAVSHSEFWHRYFYKVHQLE). The disordered stretch occupies residues 208–397 (KQRADQSISE…ISEDWEKDFD (190 aa)). The segment covering 219 to 229 (PGWEEEEEELE) has biased composition (acidic residues). Residues 236-245 (KEAKIPKETK) show a composition bias toward basic and acidic residues. The segment covering 268–279 (PAEATPSESSES) has biased composition (low complexity). The segment covering 324-333 (GPPPPPPSKP) has biased composition (pro residues). Over residues 347 to 364 (PPARVETLREEVPTDLRV) the composition is skewed to basic and acidic residues. T353 is subject to Phosphothreonine. The segment covering 368–387 (NSDSGKSTPSNNGKKGSSTD) has biased composition (polar residues). Phosphoserine is present on residues S384 and S385. The span at 388 to 397 (ISEDWEKDFD) shows a compositional bias: acidic residues. S415 bears the Phosphoserine mark.

The chain is BSD domain-containing protein 1 (Bsdc1) from Mus musculus (Mouse).